The sequence spans 345 residues: Esterase (345 aa).

The first 39 residues, 1–39, serve as a signal peptide directing secretion; that stretch reads MSSAMRKTTNSPVVRRLTAAAVALGSCLALAGPAGSAGA. 3 cysteine pairs are disulfide-bonded: C73–C103, C156–C180, and C236–C294.

It is found in the secreted. The sequence is that of Esterase (estA) from Streptomyces scabiei.